Reading from the N-terminus, the 420-residue chain is CinA-like protein (420 aa).

Belongs to the CinA family.

In Chloroherpeton thalassium (strain ATCC 35110 / GB-78), this protein is CinA-like protein.